The following is a 486-amino-acid chain: Odorant receptor coreceptor (486 aa).

Residues 1–47 (MTTSMQPSKYTGLVADLMPNIRAMKYSGLFMHNFTGGSAFMKKVYSS) lie on the Cytoplasmic side of the membrane. A helical membrane pass occupies residues 48 to 68 (VHLVFLLMQFTFILVNMALNA). At 69–75 (EEVNELS) the chain is on the extracellular side. A helical membrane pass occupies residues 76–96 (GNTITTLFFTHCITKFIYLAV). Topologically, residues 97–135 (NQKNFYRTLNIWNQVNTHPLFAESDARYHSIALAKMRKL) are cytoplasmic. A helical membrane pass occupies residues 136–156 (FFLVMLTTVASATAWTTITFF). Over 157–191 (GDSVKMVVDHETNSSIPVEIPRLPIKSFYPWNASH) the chain is Extracellular. 2 N-linked (GlcNAc...) asparagine glycosylation sites follow: N169 and N188. A helical transmembrane segment spans residues 192–212 (GMFYMISFAFQIYYVLFSMIH). Topologically, residues 213 to 351 (SNLCDVMFCS…VERHKHVVRL (139 aa)) are cytoplasmic. A helical membrane pass occupies residues 352–372 (VAAIGDTYGAALLLHMLTSTI). Topologically, residues 373-390 (KLTLLAYQATKINGVNVY) are extracellular. A helical transmembrane segment spans residues 391–411 (AFTVVGYLGYALAQVFHFCIF). At 412 to 462 (GNRLIEESSSVMEAAYSCHWYDGSEEAKTFVQIVCQQCQKAMSISGAKFFT) the chain is on the cytoplasmic side. A helical transmembrane segment spans residues 463 to 483 (VSLDLFASVLGAVVTYFMVLV). The Extracellular segment spans residues 484-486 (QLK).

Belongs to the insect chemoreceptor superfamily. Heteromeric odorant receptor channel (TC 1.A.69) family. Orco subfamily. In terms of assembly, heterodimer with conventional odorant receptors (ORs). Complexes exist early in the endomembrane system in olfactory sensory neurons (OSNs), coupling these complexes to the conserved ciliary trafficking pathway. In terms of tissue distribution, expression is restricted to olfactory sensory neurons (OSNs). Coexpressed with Snmp in a lateral-distal population of OSNs. Expressed in the embryonic antennal-maxillary complex, in all 21 OSNs of the larval dorsal organ, in the pupal antennal OSNs, in all 120 adult maxillary palp neurons and in approximately 70-80% of adult antennal OSNs, where expression is highest at the dorsal-medial edge. Localized to OSN cell bodies and to the distal portion of ciliated OSN dendrites.

The protein resides in the cell membrane. In terms of biological role, odorant coreceptor which complexes with conventional odorant receptors (ORs) to form odorant-sensing units, providing sensitive and prolonged odorant signaling and calcium permeability. Orco is a universal and integral part of the functional odorant receptor, involved in the dendritic localization of other olfactory receptors. Expression of Orco alone leads to formation of rapid and transient ion channels not directly responding to odorants, but directly activated by intracellular cAMP or cGMP. Snmp, Or67d and lush act in concert to capture fatty-acid-derived male pheromone 11-cis vaccenyl acetate (cVA) molecules on the surface of Or67d expressing olfactory dendrites and facilitate their transfer to the odorant-receptor Orco complex. This chain is Odorant receptor coreceptor (Orco), found in Drosophila melanogaster (Fruit fly).